The chain runs to 223 residues: Mediator of RNA polymerase II transcription subunit 8 (223 aa).

Residues 2–138 are interaction with TBP1; it reads SQSTASLVPE…VRETSGVTTA (137 aa). Positions 33–59 form a coiled coil; that stretch reads LDAVRMRLAQLTHSLRRIRDEMSKAEL.

It belongs to the Mediator complex subunit 8 family. In terms of assembly, component of the Mediator complex, which is composed of at least 21 subunits that form three structurally distinct submodules. The Mediator head module contains MED6, MED8, MED11, SRB4/MED17, SRB5/MED18, ROX3/MED19, SRB2/MED20 and SRB6/MED22, the middle module contains MED1, MED4, NUT1/MED5, MED7, CSE2/MED9, NUT2/MED10, SRB7/MED21 and SOH1/MED31, and the tail module contains MED2, PGD1/MED3, RGR1/MED14, GAL11/MED15 and SIN4/MED16. The head and the middle modules interact directly with RNA polymerase II, whereas the elongated tail module interacts with gene-specific regulatory proteins. MED8 interacts directly with SRB5/MED18. Also interacts with Hexokinase B (HXK2). Interacts with TBP1.

It localises to the nucleus. In terms of biological role, component of the Mediator complex, a coactivator involved in the regulated transcription of nearly all RNA polymerase II-dependent genes. Mediator functions as a bridge to convey information from gene-specific regulatory proteins to the basal RNA polymerase II transcription machinery. The Mediator complex, having a compact conformation in its free form, is recruited to promoters by direct interactions with regulatory proteins and serves for the assembly of a functional preinitiation complex with RNA polymerase II and the general transcription factors. The Mediator complex unfolds to an extended conformation and partially surrounds RNA polymerase II, specifically interacting with the unphosphorylated form of the C-terminal domain (CTD) of RNA polymerase II. The Mediator complex dissociates from the RNA polymerase II holoenzyme and stays at the promoter when transcriptional elongation begins. MED8 binds to the consensus sequence 5'-[AC][AG]GAAAT-3' in both the UAS of SUC2 and the DRS2 of HXK2. The sequence is that of Mediator of RNA polymerase II transcription subunit 8 (MED8) from Saccharomyces cerevisiae (strain ATCC 204508 / S288c) (Baker's yeast).